A 399-amino-acid polypeptide reads, in one-letter code: 4-hydroxy-3-methylbut-2-enyl diphosphate reductase (399 aa).

Cys66 serves as a coordination point for [4Fe-4S] cluster. His96 lines the (2E)-4-hydroxy-3-methylbut-2-enyl diphosphate pocket. Dimethylallyl diphosphate is bound at residue His96. Residue His96 coordinates isopentenyl diphosphate. [4Fe-4S] cluster is bound at residue Cys157. His185 lines the (2E)-4-hydroxy-3-methylbut-2-enyl diphosphate pocket. His185 lines the dimethylallyl diphosphate pocket. Isopentenyl diphosphate is bound at residue His185. Glu187 (proton donor) is an active-site residue. Position 250 (Thr250) interacts with (2E)-4-hydroxy-3-methylbut-2-enyl diphosphate. [4Fe-4S] cluster is bound at residue Cys288. 4 residues coordinate (2E)-4-hydroxy-3-methylbut-2-enyl diphosphate: Ser317, Ser318, Asn319, and Ser380. Residues Ser317, Ser318, Asn319, and Ser380 each contribute to the dimethylallyl diphosphate site. Isopentenyl diphosphate contacts are provided by Ser317, Ser318, Asn319, and Ser380.

This sequence belongs to the IspH family. [4Fe-4S] cluster is required as a cofactor.

It catalyses the reaction isopentenyl diphosphate + 2 oxidized [2Fe-2S]-[ferredoxin] + H2O = (2E)-4-hydroxy-3-methylbut-2-enyl diphosphate + 2 reduced [2Fe-2S]-[ferredoxin] + 2 H(+). The enzyme catalyses dimethylallyl diphosphate + 2 oxidized [2Fe-2S]-[ferredoxin] + H2O = (2E)-4-hydroxy-3-methylbut-2-enyl diphosphate + 2 reduced [2Fe-2S]-[ferredoxin] + 2 H(+). It participates in isoprenoid biosynthesis; dimethylallyl diphosphate biosynthesis; dimethylallyl diphosphate from (2E)-4-hydroxy-3-methylbutenyl diphosphate: step 1/1. It functions in the pathway isoprenoid biosynthesis; isopentenyl diphosphate biosynthesis via DXP pathway; isopentenyl diphosphate from 1-deoxy-D-xylulose 5-phosphate: step 6/6. Its function is as follows. Catalyzes the conversion of 1-hydroxy-2-methyl-2-(E)-butenyl 4-diphosphate (HMBPP) into a mixture of isopentenyl diphosphate (IPP) and dimethylallyl diphosphate (DMAPP). Acts in the terminal step of the DOXP/MEP pathway for isoprenoid precursor biosynthesis. This Parasynechococcus marenigrum (strain WH8102) protein is 4-hydroxy-3-methylbut-2-enyl diphosphate reductase.